The following is a 526-amino-acid chain: Outer capsid protein VP5 (526 aa).

The segment at 1–42 is involved in membrane permeabilization; sequence MGKIIKSLSRFGKKVGNALTSNTAKKIYNTIGKAAERFAESE.

Belongs to the orbivirus VP5 family.

Its subcellular location is the virion. VP5 protein is one of the two proteins (with VP2) which constitute the virus particle outer capsid. Acts as a membrane permeabilization protein that mediates release of viral particles from endosomal compartments into the cytoplasm. Permeabilization activity is probably negatively regulated by VP2 and is triggered by endosomal degradation of VP2 and exposure to low pH. The polypeptide is Outer capsid protein VP5 (Segment-6) (Bluetongue virus 13 (isolate USA) (BTV 13)).